Here is a 306-residue protein sequence, read N- to C-terminus: D-alanine--D-alanine ligase (306 aa).

The ATP-grasp domain occupies 101 to 303 (KQVWQAVGLP…FSQLVVKILE (203 aa)). 134 to 189 (FTHLGLPLIVKPSREGSSVGMSKVNTLSELPAALEEAFRHDDDILVEKWLSGPEYT) contributes to the ATP binding site. D257, E270, and N272 together coordinate Mg(2+).

The protein belongs to the D-alanine--D-alanine ligase family. Mg(2+) is required as a cofactor. The cofactor is Mn(2+).

It localises to the cytoplasm. The enzyme catalyses 2 D-alanine + ATP = D-alanyl-D-alanine + ADP + phosphate + H(+). The protein operates within cell wall biogenesis; peptidoglycan biosynthesis. In terms of biological role, cell wall formation. This chain is D-alanine--D-alanine ligase, found in Pectobacterium carotovorum subsp. carotovorum (strain PC1).